Consider the following 377-residue polypeptide: MKEATMYYIGVMSGTSLDGVDLALMDFSCAQPQLIHADFYPMPPAIRQQISTLCNSGTTTLQALGELDHQLGLLYTDCIQQFLQKHRLSPEQITAIGCHGQTVWHSPNSHYPFTMQIGDANLIAAKTGITTVADFRRKDMAFGGQGAPLVPAFHQALFRKPNQATVVLNVGGISNISRLLPNEEVIGYDTGPGNTLLDAWIEKHQGKAYDKNAEWAKSGKVNTDLLADLLDEPFFALPAPKSTGRELFNLAWLNKKLQKHTALLPQDVQATLVELTAQSIVDQLNQIETELDRHLLVCGGGVKNCLLMARLTALLPQWQVQTTNDYGLDADYVEAAAFAWLAYQRLNDLPGNLPSVTGAKSAVSLGAIYPKEKDVAA.

14 to 21 (GTSLDGVD) is an ATP binding site.

Belongs to the anhydro-N-acetylmuramic acid kinase family.

It catalyses the reaction 1,6-anhydro-N-acetyl-beta-muramate + ATP + H2O = N-acetyl-D-muramate 6-phosphate + ADP + H(+). Its pathway is amino-sugar metabolism; 1,6-anhydro-N-acetylmuramate degradation. The protein operates within cell wall biogenesis; peptidoglycan recycling. Functionally, catalyzes the specific phosphorylation of 1,6-anhydro-N-acetylmuramic acid (anhMurNAc) with the simultaneous cleavage of the 1,6-anhydro ring, generating MurNAc-6-P. Is required for the utilization of anhMurNAc either imported from the medium or derived from its own cell wall murein, and thus plays a role in cell wall recycling. This chain is Anhydro-N-acetylmuramic acid kinase, found in Pasteurella multocida (strain Pm70).